The following is a 572-amino-acid chain: DNA polymerase (572 aa).

A 3'-5' exonuclease and strand displacement activities region spans residues 1–222 (MPRKMFSCDF…LPMDKEIRRA (222 aa)). Positions 56-66 (YFHNLKFDGAF) are interaction with the primer terminal protein. Mg(2+) is bound by residues D142 and D166. The tract at residues 223–226 (YRGG) is DNA-binding; Involved in the formation of a stable complex between TP and phi29 DNA polymerase. The tract at residues 227–572 (FTWLNDKYKE…VLVDSVFTIK (346 aa)) is initiation, polymerization and pyrophosphorolytic activities. Positions 246 and 247 each coordinate Mg(2+). 3 residues coordinate 5-methyl-UTP: Y251, K368, and K380. Mg(2+) is bound by residues D453 and D455. Residue D455 participates in 5-methyl-UTP binding.

The protein belongs to the DNA polymerase type-B family. In terms of assembly, interacts with the primer terminal protein; this interaction allows the initiation of TP-primed DNA replication at both viral DNA ends. Interacts with DNA. It depends on Mg(2+) as a cofactor.

The catalysed reaction is DNA(n) + a 2'-deoxyribonucleoside 5'-triphosphate = DNA(n+1) + diphosphate. Functionally, polymerase responsible for protein-primed viral DNA replication by strand displacement with high processivity and fidelity. To start replication, the DNA polymerase forms a heterodimer with a free primer terminal protein (TP), recognizes the replication origins at both 5' ends of the linear chromosome, and initiates replication using as primer the OH-group of Ser-232 of the TP. This polymerase possesses three enzymatic activities: DNA synthesis (polymerase), primer terminal protein (TP) deoxynucleotidylation, which is the formation of a covalent linkage (phosphoester) between the hydroxyl group of a specific serine residue in TP and 5'-dAMP, a reaction directed by the second T at the 3' end, and 3' to 5' exonuclease activity. Exonuclease activity has a proofreading purpose. The polypeptide is DNA polymerase (2) (Bacillus phage B103 (Bacteriophage B103)).